Here is a 196-residue protein sequence, read N- to C-terminus: ATP-dependent Clp protease proteolytic subunit (196 aa).

S99 acts as the Nucleophile in catalysis. H124 is a catalytic residue.

This sequence belongs to the peptidase S14 family. In terms of assembly, fourteen ClpP subunits assemble into 2 heptameric rings which stack back to back to give a disk-like structure with a central cavity, resembling the structure of eukaryotic proteasomes.

It is found in the cytoplasm. The enzyme catalyses Hydrolysis of proteins to small peptides in the presence of ATP and magnesium. alpha-casein is the usual test substrate. In the absence of ATP, only oligopeptides shorter than five residues are hydrolyzed (such as succinyl-Leu-Tyr-|-NHMec, and Leu-Tyr-Leu-|-Tyr-Trp, in which cleavage of the -Tyr-|-Leu- and -Tyr-|-Trp bonds also occurs).. Functionally, cleaves peptides in various proteins in a process that requires ATP hydrolysis. Has a chymotrypsin-like activity. Plays a major role in the degradation of misfolded proteins. In Helicobacter hepaticus (strain ATCC 51449 / 3B1), this protein is ATP-dependent Clp protease proteolytic subunit.